A 323-amino-acid polypeptide reads, in one-letter code: tRNA N6-adenosine threonylcarbamoyltransferase (323 aa).

Residues H110 and H114 each coordinate Fe cation. Substrate-binding positions include 131 to 135 (VASGG), D164, G177, and N264. Residue D288 participates in Fe cation binding.

It belongs to the KAE1 / TsaD family. It depends on Fe(2+) as a cofactor.

Its subcellular location is the cytoplasm. The catalysed reaction is L-threonylcarbamoyladenylate + adenosine(37) in tRNA = N(6)-L-threonylcarbamoyladenosine(37) in tRNA + AMP + H(+). In terms of biological role, required for the formation of a threonylcarbamoyl group on adenosine at position 37 (t(6)A37) in tRNAs that read codons beginning with adenine. Is involved in the transfer of the threonylcarbamoyl moiety of threonylcarbamoyl-AMP (TC-AMP) to the N6 group of A37, together with TsaE and TsaB. TsaD likely plays a direct catalytic role in this reaction. The protein is tRNA N6-adenosine threonylcarbamoyltransferase of Thermus thermophilus (strain ATCC BAA-163 / DSM 7039 / HB27).